A 358-amino-acid chain; its full sequence is Phosphoserine aminotransferase (358 aa).

Arginine 41 provides a ligand contact to L-glutamate. Pyridoxal 5'-phosphate-binding positions include alanine 75–serine 76, tryptophan 100, threonine 148, aspartate 167, and glutamine 190. Residue lysine 191 is modified to N6-(pyridoxal phosphate)lysine. Asparagine 233–threonine 234 is a pyridoxal 5'-phosphate binding site.

The protein belongs to the class-V pyridoxal-phosphate-dependent aminotransferase family. SerC subfamily. In terms of assembly, homodimer. It depends on pyridoxal 5'-phosphate as a cofactor.

The protein resides in the cytoplasm. It carries out the reaction O-phospho-L-serine + 2-oxoglutarate = 3-phosphooxypyruvate + L-glutamate. It catalyses the reaction 4-(phosphooxy)-L-threonine + 2-oxoglutarate = (R)-3-hydroxy-2-oxo-4-phosphooxybutanoate + L-glutamate. It participates in amino-acid biosynthesis; L-serine biosynthesis; L-serine from 3-phospho-D-glycerate: step 2/3. The protein operates within cofactor biosynthesis; pyridoxine 5'-phosphate biosynthesis; pyridoxine 5'-phosphate from D-erythrose 4-phosphate: step 3/5. Its function is as follows. Catalyzes the reversible conversion of 3-phosphohydroxypyruvate to phosphoserine and of 3-hydroxy-2-oxo-4-phosphonooxybutanoate to phosphohydroxythreonine. The polypeptide is Phosphoserine aminotransferase (Campylobacter jejuni subsp. jejuni serotype O:2 (strain ATCC 700819 / NCTC 11168)).